The chain runs to 506 residues: Glycine--tRNA ligase (506 aa).

Substrate-binding residues include R99 and E189. ATP-binding positions include 221–223 (RNE), 231–236 (FRVREF), 305–306 (EL), and 364–367 (GVDR). Substrate is bound at residue 236 to 240 (FEQME). Substrate is bound at residue 360–364 (EPSAG).

It belongs to the class-II aminoacyl-tRNA synthetase family. As to quaternary structure, homodimer.

The protein resides in the cytoplasm. The catalysed reaction is tRNA(Gly) + glycine + ATP = glycyl-tRNA(Gly) + AMP + diphosphate. Functionally, catalyzes the attachment of glycine to tRNA(Gly). The protein is Glycine--tRNA ligase of Thermus thermophilus (strain ATCC BAA-163 / DSM 7039 / HB27).